We begin with the raw amino-acid sequence, 609 residues long: Albumin (609 aa).

Positions 1–18 (MKWVTFISLLFLFSSAYS) are cleaved as a signal peptide. A propeptide spanning residues 19 to 24 (RGVFRR) is cleaved from the precursor. 3 consecutive Albumin domains span residues 19–210 (RGVF…DELR), 211–403 (DEGK…EFKP), and 404–601 (LVEE…KLVA). H27 contributes to the Cu cation binding site. S29 is subject to Phosphoserine; by FAM20C. Residue E30 coordinates Ca(2+). A glycan (N-linked (Glc) (glycation) lysine) is linked at K36. D37 contributes to the Ca(2+) binding site. The N-linked (Glc) (glycation) lysine; in vitro glycan is linked to K75. A disulfide bond links C77 and C86. A phosphoserine; by FAM20C mark is found at S82 and S89. H91 is a Zn(2+) binding site. Cystine bridges form between C99–C115, C114–C125, C148–C193, and C192–C201. T107 is modified (phosphothreonine; by FAM20C). 2 N-linked (Glc) (glycation) lysine; in vitro glycosylation sites follow: K161 and K186. The N-linked (Glc) (glycation) lysine; in vitro glycan is linked to K223. 2 cysteine pairs are disulfide-bonded: C224–C270 and C269–C277. At K229 the chain carries N6-succinyllysine. The N-linked (Glc) (glycation) lysine; in vitro glycan is linked to K249. Residue K257 is glycosylated (N-linked (Glc) (glycation) lysine). Residue K264 coordinates (4Z,15Z)-bilirubin IXalpha. Residue E268 participates in Ca(2+) binding. Zn(2+)-binding residues include H271 and D273. Positions 273, 276, 279, and 283 each coordinate Ca(2+). 2 cysteine pairs are disulfide-bonded: C289/C303 and C302/C313. S297 bears the Phosphoserine mark. N-linked (Glc) (glycation) lysine; in vitro glycosylation occurs at K300. K305 is a glycosylation site (N-linked (Glc) (glycation) lysine). K337 carries N-linked (Glc) (glycation) lysine; in vitro glycosylation. Cystine bridges form between C340–C385 and C384–C393. A glycan (N-linked (Glc) (glycation) lysine) is linked at K341. The N-linked (GlcNAc...) asparagine; in variant Redhill glycan is linked to N342. The N-linked (Glc) (glycation) lysine; in vitro glycan is linked to K347. K375 carries an N-linked (Glc) (glycation) lysine glycan. N-linked (Glc) (glycation) lysine; in vitro glycans are attached at residues K402 and K437. Cystine bridges form between C416–C462, C461–C472, C485–C501, and C500–C511. Position 443 is a phosphoserine (S443). Phosphothreonine is present on residues T444 and T446. K460 bears the N6-succinyllysine mark. K463 carries an N-linked (Glc) (glycation) lysine glycan. A glycan (N-linked (Glc) (glycation) lysine; in vitro) is linked at K468. The residue at position 513 (S513) is a Phosphoserine. D518 carries an N-linked (GlcNAc...) asparagine; in variant Casebrook glycan. Intrachain disulfides connect C538–C583 and C582–C591. K543 bears the N6-succinyllysine mark. K549 carries an N-linked (Glc) (glycation) lysine glycan. At K558 the chain carries N6-methyllysine; alternate. N-linked (Glc) (glycation) lysine; alternate glycosylation occurs at K558. N-linked (Glc) (glycation) lysine; in vitro glycosylation is found at K560 and K569. K588 is modified (N6-succinyllysine). K597 is a glycosylation site (N-linked (Glc) (glycation) lysine; in vitro).

It belongs to the ALB/AFP/VDB family. In terms of assembly, interacts with FCGRT; this interaction regulates ALB homeostasis. Interacts with TASOR. In plasma, occurs in a covalently-linked complex with chromophore-bound alpha-1-microglobulin with molar ratio 1:2 and 1:1; this interaction does not prevent fatty acid binding to ALB. Post-translationally, kenitra variant is partially O-glycosylated at Thr-620. It has two new disulfide bonds Cys-600 to Cys-602 and Cys-601 to Cys-606. In terms of processing, glycated in diabetic patients. Phosphorylated by FAM20C in the extracellular medium. Post-translationally, acetylated on Lys-223 by acetylsalicylic acid. As to expression, plasma.

It is found in the secreted. Its function is as follows. Binds water, Ca(2+), Na(+), K(+), fatty acids, hormones, bilirubin and drugs. Its main function is the regulation of the colloidal osmotic pressure of blood. Major zinc transporter in plasma, typically binds about 80% of all plasma zinc. Major calcium and magnesium transporter in plasma, binds approximately 45% of circulating calcium and magnesium in plasma. Potentially has more than two calcium-binding sites and might additionally bind calcium in a non-specific manner. The shared binding site between zinc and calcium at residue Asp-273 suggests a crosstalk between zinc and calcium transport in the blood. The rank order of affinity is zinc &gt; calcium &gt; magnesium. Binds to the bacterial siderophore enterobactin and inhibits enterobactin-mediated iron uptake of E.coli from ferric transferrin, and may thereby limit the utilization of iron and growth of enteric bacteria such as E.coli. Does not prevent iron uptake by the bacterial siderophore aerobactin. This chain is Albumin (ALB), found in Homo sapiens (Human).